The chain runs to 450 residues: tRNA modification GTPase MnmE (450 aa).

(6S)-5-formyl-5,6,7,8-tetrahydrofolate contacts are provided by Arg20, Glu78, and Lys117. The 162-residue stretch at 211–372 (GFRMVIVGKP…LEEAIYRETQ (162 aa)) folds into the TrmE-type G domain. K(+) is bound at residue Asn221. GTP contacts are provided by residues 221-226 (NVGKST), 240-246 (TDIPGTT), and 265-268 (DTAG). Ser225 contacts Mg(2+). Thr240, Ile242, and Thr245 together coordinate K(+). Thr246 serves as a coordination point for Mg(2+). Lys450 lines the (6S)-5-formyl-5,6,7,8-tetrahydrofolate pocket.

This sequence belongs to the TRAFAC class TrmE-Era-EngA-EngB-Septin-like GTPase superfamily. TrmE GTPase family. As to quaternary structure, homodimer. Heterotetramer of two MnmE and two MnmG subunits. K(+) serves as cofactor.

The protein localises to the cytoplasm. Functionally, exhibits a very high intrinsic GTPase hydrolysis rate. Involved in the addition of a carboxymethylaminomethyl (cmnm) group at the wobble position (U34) of certain tRNAs, forming tRNA-cmnm(5)s(2)U34. This is tRNA modification GTPase MnmE from Thermotoga petrophila (strain ATCC BAA-488 / DSM 13995 / JCM 10881 / RKU-1).